Here is a 264-residue protein sequence, read N- to C-terminus: uncharacterized protein (264 aa).

Residues 7–27 form a helical membrane-spanning segment; it reads LTLGICLVLLIILIVGYVIMT.

The protein belongs to the staphylococcal tandem lipoprotein family.

It is found in the cell membrane. This is an uncharacterized protein from Staphylococcus aureus (strain NCTC 8325 / PS 47).